Here is a 350-residue protein sequence, read N- to C-terminus: Histidinol-phosphate aminotransferase (350 aa).

At K209 the chain carries N6-(pyridoxal phosphate)lysine.

It belongs to the class-II pyridoxal-phosphate-dependent aminotransferase family. Histidinol-phosphate aminotransferase subfamily. Homodimer. Requires pyridoxal 5'-phosphate as cofactor.

The enzyme catalyses L-histidinol phosphate + 2-oxoglutarate = 3-(imidazol-4-yl)-2-oxopropyl phosphate + L-glutamate. Its pathway is amino-acid biosynthesis; L-histidine biosynthesis; L-histidine from 5-phospho-alpha-D-ribose 1-diphosphate: step 7/9. The sequence is that of Histidinol-phosphate aminotransferase from Citrifermentans bemidjiense (strain ATCC BAA-1014 / DSM 16622 / JCM 12645 / Bem) (Geobacter bemidjiensis).